A 923-amino-acid polypeptide reads, in one-letter code: Isoleucine--tRNA ligase (923 aa).

Positions 57–67 (PYANGDIHIGT) match the 'HIGH' region motif. Residue E561 coordinates L-isoleucyl-5'-AMP. Positions 602-606 (AMHKS) match the 'KMSKS' region motif. K605 contacts ATP. Residues C895, C898, C915, and C918 each contribute to the Zn(2+) site.

This sequence belongs to the class-I aminoacyl-tRNA synthetase family. IleS type 1 subfamily. In terms of assembly, monomer. The cofactor is Zn(2+).

It localises to the cytoplasm. It carries out the reaction tRNA(Ile) + L-isoleucine + ATP = L-isoleucyl-tRNA(Ile) + AMP + diphosphate. Its function is as follows. Catalyzes the attachment of isoleucine to tRNA(Ile). As IleRS can inadvertently accommodate and process structurally similar amino acids such as valine, to avoid such errors it has two additional distinct tRNA(Ile)-dependent editing activities. One activity is designated as 'pretransfer' editing and involves the hydrolysis of activated Val-AMP. The other activity is designated 'posttransfer' editing and involves deacylation of mischarged Val-tRNA(Ile). The protein is Isoleucine--tRNA ligase of Brachyspira hyodysenteriae (strain ATCC 49526 / WA1).